The following is a 667-amino-acid chain: UvrABC system protein B (667 aa).

Positions 28–185 (NNFKQGLKEQ…NKLIELKYQR (158 aa)) constitute a Helicase ATP-binding domain. An ATP-binding site is contributed by 41–48 (GATGTGKT). The Beta-hairpin signature appears at 94-117 (YYDYYQPEAYVASSDTYIEKDSKI). Positions 432–594 (QMDDLYFEIK…VTPTALNKTI (163 aa)) constitute a Helicase C-terminal domain. A UVR domain is found at 629-664 (NKEIKRLQKTMKEAAKALDFEKAATLRDLILDLEKK).

Belongs to the UvrB family. In terms of assembly, forms a heterotetramer with UvrA during the search for lesions. Interacts with UvrC in an incision complex.

The protein localises to the cytoplasm. Its function is as follows. The UvrABC repair system catalyzes the recognition and processing of DNA lesions. A damage recognition complex composed of 2 UvrA and 2 UvrB subunits scans DNA for abnormalities. Upon binding of the UvrA(2)B(2) complex to a putative damaged site, the DNA wraps around one UvrB monomer. DNA wrap is dependent on ATP binding by UvrB and probably causes local melting of the DNA helix, facilitating insertion of UvrB beta-hairpin between the DNA strands. Then UvrB probes one DNA strand for the presence of a lesion. If a lesion is found the UvrA subunits dissociate and the UvrB-DNA preincision complex is formed. This complex is subsequently bound by UvrC and the second UvrB is released. If no lesion is found, the DNA wraps around the other UvrB subunit that will check the other stand for damage. The chain is UvrABC system protein B from Aster yellows witches'-broom phytoplasma (strain AYWB).